The chain runs to 384 residues: Interstitial collagenase (384 aa).

A signal peptide spans 1–25; that stretch reads MLSGLWSSILALLGVFLQSVGEFRA. Positions 26 to 88 are cleaved as a propeptide — activation peptide; that stretch reads ETQEQDVEIV…STCGVPDVGE (63 aa). Positions 79–86 match the Cysteine switch motif; that stretch reads STCGVPDV. Cys81 contacts Zn(2+). 2 residues coordinate Ca(2+): Asp113 and Asp129. 2 residues coordinate Zn(2+): His139 and Asp141. Asp146, Gly147, Gly149, and Asn151 together coordinate Ca(2+). His154 contacts Zn(2+). Gly161, Gly163, and Asp165 together coordinate Ca(2+). A Zn(2+)-binding site is contributed by His167. Positions 169, 170, and 172 each coordinate Ca(2+). Zn(2+) is bound at residue His189. Glu190 is an active-site residue. Residues His193 and His199 each coordinate Zn(2+). The interval 218–239 is disordered; it reads LSQDDIDGPSGNPVQPRGPQTP. Cysteines 242 and 381 form a disulfide. Ca(2+)-binding residues include Asp249, Gln277, and Asp347. Hemopexin repeat units follow at residues 273–319 and 333–381; these read ELGL…FGFP and KQSM…WFNC.

The protein belongs to the peptidase M10A family. Requires Ca(2+) as cofactor. Zn(2+) is required as a cofactor.

Its subcellular location is the secreted. The protein resides in the extracellular space. It localises to the extracellular matrix. The enzyme catalyses Cleavage of the triple helix of collagen at about three-quarters of the length of the molecule from the N-terminus, at 775-Gly-|-Ile-776 in the alpha1(I) chain. Cleaves synthetic substrates and alpha-macroglobulins at bonds where P1' is a hydrophobic residue.. Can be activated without removal of the activation peptide. Cleaves collagens of types I, II, and III at one site in the helical domain. Also cleaves collagens of types VII and X. This is Interstitial collagenase from Aquarana catesbeiana (American bullfrog).